A 527-amino-acid chain; its full sequence is Eukaryotic translation initiation factor 4B1 (527 aa).

2 disordered regions span residues 1-370 and 453-527; these read MAKP…REVV and FGQR…RQGW. Low complexity-rich tracts occupy residues 35-45 and 74-85; these read AAAGGAASFPS and GAAGAPRRVAPA. Basic and acidic residues-rich tracts occupy residues 102–155 and 181–194; these read PRER…DNWG and RSDDIDNWSRDKKP. Positions 196 to 203 match the Nuclear localization signal motif; the sequence is PSRYPSLG. Positions 203-232 are enriched in gly residues; it reads GTGGGFRESSGGGFRESSGGGFRESSGGGF. The span at 293 to 317 shows a compositional bias: basic and acidic residues; the sequence is KPREEVLAEKGLDWRKMEGEIEKKT. Residues 319 to 336 show a composition bias toward low complexity; that stretch reads RPTSSHSSRPNSAHSSRP. Composition is skewed to basic and acidic residues over residues 472–485 and 496–510; these read EEPHVAVAHMDRPR and PVEERWGFHGSRERG. A compositionally biased stretch (low complexity) spans 518–527; the sequence is SDRSSTRQGW.

This sequence belongs to the eIF-4 subunit B family. In terms of assembly, homodimer. Nonspherical monomer. mRNA-discriminating component of initiation complexes. Post-translationally, phosphorylated.

Its subcellular location is the nucleus. Functionally, promotes the eIF4F and eIF4A RNA-dependent ATP-hydrolysis activity with different efficiency depending on mRNAs, thus providing mRNA discrimination during initiation of translation. This is Eukaryotic translation initiation factor 4B1 from Triticum aestivum (Wheat).